We begin with the raw amino-acid sequence, 182 residues long: Nucleosome assembly protein 1-like 5 (182 aa).

The segment at 1–71 (MADSENQGPA…APKPKNDFIE (71 aa)) is disordered. Composition is skewed to low complexity over residues 7-21 (QGPA…AAEA) and 28-49 (AEGG…SAAG). Residues 81-107 (VLALKKLQKRCDKIEAKFDKEFQALEK) adopt a coiled-coil conformation. Positions 134 to 182 (LEGEEEEEEEYEDDEEEGEDEEEEEAAAEAAAGAKHDDAHAEMPDDAKK) are disordered. Over residues 135–160 (EGEEEEEEEYEDDEEEGEDEEEEEAA) the composition is skewed to acidic residues. Residues 167-182 (AKHDDAHAEMPDDAKK) show a composition bias toward basic and acidic residues.

This sequence belongs to the nucleosome assembly protein (NAP) family. As to expression, predominantly expressed in brain.

It is found in the nucleus. This is Nucleosome assembly protein 1-like 5 (NAP1L5) from Homo sapiens (Human).